A 242-amino-acid polypeptide reads, in one-letter code: uncharacterized protein (242 aa).

Residues Gln-17–Pro-85 enclose the HTH gntR-type domain. The H-T-H motif DNA-binding region spans Glu-45 to Ala-64.

This is an uncharacterized protein from Mycobacterium tuberculosis (strain ATCC 25618 / H37Rv).